The primary structure comprises 215 residues: Probable serine/threonine-protein kinase 2 (215 aa).

The 205-residue stretch at 1-205 (MKPEQLVYLN…WLLKEMEQLL (205 aa)) folds into the Protein kinase domain.

This sequence belongs to the protein kinase superfamily. Ser/Thr protein kinase family. Interacts with the kinase domain of host EIF2AK2.

It is found in the host cytoplasm. It carries out the reaction L-seryl-[protein] + ATP = O-phospho-L-seryl-[protein] + ADP + H(+). The catalysed reaction is L-threonyl-[protein] + ATP = O-phospho-L-threonyl-[protein] + ADP + H(+). Plays a role in the inhibition of host eIF2alpha/EIF2S1 phosphorylation, thereby increasing viral fitness. In the insect host, targets the endogenous insect heme-regulated inhibitor (HRI)-like eIF2alpha kinase. The chain is Probable serine/threonine-protein kinase 2 (PK2) from Autographa californica nuclear polyhedrosis virus (AcMNPV).